A 198-amino-acid chain; its full sequence is Glycerol-3-phosphate acyltransferase (198 aa).

5 helical membrane passes run 2–22 (YAVLTAIIAYLIGCINNAYIF), 48–70 (LGYKAAAPVFALDVLKGVIAVLI), 75–97 (MGNTGAMIAGIAVVCGHNWPVFL), 111–131 (VVMTVSPLLGLIALAIGVTVI), and 154–174 (IFWNSTQIFIFSLILASLAIF).

Belongs to the PlsY family. In terms of assembly, probably interacts with PlsX.

It is found in the cell membrane. The catalysed reaction is an acyl phosphate + sn-glycerol 3-phosphate = a 1-acyl-sn-glycero-3-phosphate + phosphate. It functions in the pathway lipid metabolism; phospholipid metabolism. Functionally, catalyzes the transfer of an acyl group from acyl-phosphate (acyl-PO(4)) to glycerol-3-phosphate (G3P) to form lysophosphatidic acid (LPA). This enzyme utilizes acyl-phosphate as fatty acyl donor, but not acyl-CoA or acyl-ACP. The polypeptide is Glycerol-3-phosphate acyltransferase (Thermoanaerobacter sp. (strain X514)).